The chain runs to 894 residues: Protein SEY1 homolog (894 aa).

Low complexity-rich tracts occupy residues methionine 1–threonine 10 and valine 36–glutamine 48. The interval methionine 1 to histidine 97 is disordered. The Cytoplasmic portion of the chain corresponds to methionine 1–glycine 800. Positions arginine 21–glutamate 60 form a coiled coil. Over residues glutamate 49 to valine 65 the composition is skewed to acidic residues. The segment covering threonine 78 to glutamine 93 has biased composition (low complexity). The 224-residue stretch at glycine 138–tyrosine 361 folds into the GB1/RHD3-type G domain. Glycine 148 to serine 155 lines the GTP pocket. A helical transmembrane segment spans residues valine 801 to isoleucine 821. Residues serine 822 to proline 824 are Lumenal-facing. Residues leucine 825 to leucine 845 traverse the membrane as a helical segment. The Cytoplasmic segment spans residues alanine 846–glutamate 894.

It belongs to the TRAFAC class dynamin-like GTPase superfamily. GB1/RHD3 GTPase family. RHD3 subfamily.

It localises to the endoplasmic reticulum membrane. Its function is as follows. Probable GTP-binding protein that may be involved in cell development. This Dictyostelium discoideum (Social amoeba) protein is Protein SEY1 homolog.